A 342-amino-acid chain; its full sequence is NAD kinase (342 aa).

D66 serves as the catalytic Proton acceptor. NAD(+) contacts are provided by residues 66–67, R71, 141–142, K152, D171, 182–187, and A206; these read DG, ND, and TAYAFS.

It belongs to the NAD kinase family. A divalent metal cation is required as a cofactor.

It is found in the cytoplasm. It carries out the reaction NAD(+) + ATP = ADP + NADP(+) + H(+). Functionally, involved in the regulation of the intracellular balance of NAD and NADP, and is a key enzyme in the biosynthesis of NADP. Catalyzes specifically the phosphorylation on 2'-hydroxyl of the adenosine moiety of NAD to yield NADP. The protein is NAD kinase of Bifidobacterium longum (strain NCC 2705).